The primary structure comprises 396 residues: Probable sugar efflux transporter (396 aa).

A run of 12 helical transmembrane segments spans residues 15–35 (VVTLAVAAFIFNTTEFVPVGL), 50–70 (VGIMLTIYAWVVALMSLPFML), 81–101 (LICLFVVFIASHVLSFLSWSF), 103–123 (VLVISRIGVAFAHAIFWSITA), 136–156 (AQALSLIATGTALAMVLGLPL), 170–190 (FFAIGIGALITLLCLIKLLPL), 209–229 (PALMSIYLLTVVVVTAHYTAY), 246–266 (FATALLLLLGGAGIIGSVIFG), 275–295 (ALVSTAIALLLVCLALLLPAA), 299–319 (IHLGVLSIFWGIAMMLIGLGM), 333–353 (VAMALFSGIFNIGIGAGALVG), and 364–384 (MIGYVGAVPAFAALIWSIIIF).

The protein belongs to the major facilitator superfamily. SotB (TC 2.A.1.2) family.

It localises to the cell inner membrane. Its function is as follows. Involved in the efflux of sugars. The physiological role may be the reduction of the intracellular concentration of toxic sugars or sugar metabolites. The chain is Probable sugar efflux transporter from Shigella boydii serotype 18 (strain CDC 3083-94 / BS512).